Reading from the N-terminus, the 397-residue chain is MAIESIKNRFAPVLAKREAEALYRRRPLVTSPQTAEMQINGLQVINFSSNDYLGLANHPALKHSCETIQDLSYGSGAAHLVTGHHLEHHLLEDELADWLGCERALLFSTGYMANLAVQQTLMQKGDWILADKLNHASLIDGARYSEADLKRYPHLDMQALEKRLQKAQQENRQCLIVTDGVFSMDGDCAPLQTIQALAKTYQAWLFLDDAHGFGTLGEQGKGTLAHFNLTPDENTIIMGTLGKAFGASGAFVAGSEVLVETLIQMARPYIYTTAMPPINARVARTALKQVQQADAEREQLKRNIQHFQTGANQLGLTLWPSDSAIQPIMLGRSAQAIQWSEALKQKGLWVTAIRPPTVPKNTARLRVTLSAAHTAEHIEKLLQALAQCQDDFPSSNT.

Arg-24 serves as a coordination point for substrate. Residue 110–111 (GY) participates in pyridoxal 5'-phosphate binding. His-135 is a substrate binding site. The pyridoxal 5'-phosphate site is built by Ser-183, His-211, and Thr-240. Lys-243 is modified (N6-(pyridoxal phosphate)lysine). Residue Thr-357 participates in substrate binding.

Belongs to the class-II pyridoxal-phosphate-dependent aminotransferase family. BioF subfamily. In terms of assembly, homodimer. Pyridoxal 5'-phosphate is required as a cofactor.

The enzyme catalyses 6-carboxyhexanoyl-[ACP] + L-alanine + H(+) = (8S)-8-amino-7-oxononanoate + holo-[ACP] + CO2. The protein operates within cofactor biosynthesis; biotin biosynthesis. In terms of biological role, catalyzes the decarboxylative condensation of pimeloyl-[acyl-carrier protein] and L-alanine to produce 8-amino-7-oxononanoate (AON), [acyl-carrier protein], and carbon dioxide. This chain is 8-amino-7-oxononanoate synthase, found in Hydrogenovibrio crunogenus (strain DSM 25203 / XCL-2) (Thiomicrospira crunogena).